The primary structure comprises 156 residues: MNNAVKLNSIFTKLSKKKKPKLLGRGIGCGKGKTSGRGHKGQKARSGVSINGFEGGQQSIYTRLPKRGFKPIRRSIYSIINVGDIQRLMEAKKIVKDSVIDKERLYKLGFIKSIKDKIKLLNKGKLSEKFVFHVDFASEAAKKSVASVGGSVEILS.

The disordered stretch occupies residues 25-48; the sequence is RGIGCGKGKTSGRGHKGQKARSGV. The span at 34–43 shows a compositional bias: basic residues; that stretch reads TSGRGHKGQK.

It belongs to the universal ribosomal protein uL15 family. Part of the 50S ribosomal subunit.

In terms of biological role, binds to the 23S rRNA. The polypeptide is Large ribosomal subunit protein uL15 (Wolbachia pipientis wMel).